We begin with the raw amino-acid sequence, 277 residues long: Tumor necrosis factor-inducible gene 6 protein (277 aa).

The first 17 residues, 1–17, serve as a signal peptide directing secretion; it reads MIILIYLFLLLWEDTQG. The Link domain occupies 36–129; the sequence is GVYHREARSG…SERWDAYCYN (94 aa). 3 disulfide bridges follow: cysteine 58–cysteine 127, cysteine 82–cysteine 103, and cysteine 135–cysteine 161. Asparagine 118 carries an N-linked (GlcNAc...) asparagine glycan. In terms of domain architecture, CUB spans 135–247; sequence CGGVFTDPKQ…GGFQIKYVAM (113 aa). Ca(2+)-binding residues include glutamate 183, aspartate 191, aspartate 232, serine 234, and valine 235. Cysteine 188 and cysteine 210 are oxidised to a cystine. An N-linked (GlcNAc...) asparagine glycan is attached at asparagine 258.

As to quaternary structure, interacts (via Link domain) with inter-alpha-inhibitor (I-alpha-I) component bikunin. Interacts with ITIH2/HC2; this interaction is required for transesterification of the HC to hyaluronan. Interacts (via Link and CUB domains) with ITIH1. Chondroitin sulfate may be required for the stability of the complex. Interacts (via Link domain) with various C-X-C and C-C chemokines including PF4, CXCL8, CXCL11, CXCL12, CCL2, CCL7, CCL19, CCL21, and CCL27; this interaction interferes with chemokine binding to glycosaminoglycans. Interacts (primarily via Link domain) with BMP2; this interaction is inhibited by hyaluronan. Interacts (via both Link and CUB domains) with TNFSF11. Interacts (via CUB domain) with FN1 (via type III repeats 9-14); this interaction enhances fibronectin fibril assembly. TNFAIP6 may act as a bridging molecule between FN1 and THBS1. Post-translationally, N-glycosylated. As to expression, expressed in airway epithelium and submucosal gland (at protein level). Colocalizes with bikunin at the ciliary border. Present in bronchoalveolar lavage fluid (at protein level). Expressed in mesenchymal stem cells. Found in the synovial fluid of patients with rheumatoid arthritis.

It localises to the secreted. In terms of biological role, major regulator of extracellular matrix organization during tissue remodeling. Catalyzes the transfer of a heavy chain (HC) from inter-alpha-inhibitor (I-alpha-I) complex to hyaluronan. Cleaves the ester bond between the C-terminus of the HC and GalNAc residue of the chondroitin sulfate chain in I-alpha-I complex followed by transesterification of the HC to hyaluronan. In the process, potentiates the antiprotease function of I-alpha-I complex through release of free bikunin. Acts as a catalyst in the formation of hyaluronan-HC oligomers and hyaluronan-rich matrix surrounding the cumulus cell-oocyte complex, a necessary step for oocyte fertilization. Assembles hyaluronan in pericellular matrices that serve as platforms for receptor clustering and signaling. Enables binding of hyaluronan deposited on the surface of macrophages to LYVE1 on lymphatic endothelium and facilitates macrophage extravasation. Alters hyaluronan binding to functionally latent CD44 on vascular endothelium, switching CD44 into an active state that supports leukocyte rolling. Modulates the interaction of chemokines with extracellular matrix components and proteoglycans on endothelial cell surface, likely preventing chemokine gradient formation. In a negative feedback mechanism, may limit excessive neutrophil recruitment at inflammatory sites by antagonizing the association of CXCL8 with glycosaminoglycans on vascular endothelium. Has a role in osteogenesis and bone remodeling. Inhibits BMP2-dependent differentiation of mesenchymal stem cell to osteoblasts. Protects against bone erosion during inflammation by inhibiting TNFSF11/RANKL-dependent osteoclast activation. The polypeptide is Tumor necrosis factor-inducible gene 6 protein (TNFAIP6) (Homo sapiens (Human)).